Here is a 232-residue protein sequence, read N- to C-terminus: Phosphatidylserine decarboxylase proenzyme (232 aa).

The active-site Schiff-base intermediate with substrate; via pyruvic acid is S190. A Pyruvic acid (Ser); by autocatalysis modification is found at S190.

Belongs to the phosphatidylserine decarboxylase family. PSD-A subfamily. Heterodimer of a large membrane-associated beta subunit and a small pyruvoyl-containing alpha subunit. Requires pyruvate as cofactor. Post-translationally, is synthesized initially as an inactive proenzyme. Formation of the active enzyme involves a self-maturation process in which the active site pyruvoyl group is generated from an internal serine residue via an autocatalytic post-translational modification. Two non-identical subunits are generated from the proenzyme in this reaction, and the pyruvate is formed at the N-terminus of the alpha chain, which is derived from the carboxyl end of the proenzyme. The post-translation cleavage follows an unusual pathway, termed non-hydrolytic serinolysis, in which the side chain hydroxyl group of the serine supplies its oxygen atom to form the C-terminus of the beta chain, while the remainder of the serine residue undergoes an oxidative deamination to produce ammonia and the pyruvoyl prosthetic group on the alpha chain.

Its subcellular location is the cell membrane. The enzyme catalyses a 1,2-diacyl-sn-glycero-3-phospho-L-serine + H(+) = a 1,2-diacyl-sn-glycero-3-phosphoethanolamine + CO2. It functions in the pathway phospholipid metabolism; phosphatidylethanolamine biosynthesis; phosphatidylethanolamine from CDP-diacylglycerol: step 2/2. Functionally, catalyzes the formation of phosphatidylethanolamine (PtdEtn) from phosphatidylserine (PtdSer). The chain is Phosphatidylserine decarboxylase proenzyme from Rhodopseudomonas palustris (strain HaA2).